We begin with the raw amino-acid sequence, 500 residues long: Probable cytosol aminopeptidase (500 aa).

Mn(2+)-binding residues include Lys268 and Asp273. Lys280 is a catalytic residue. The Mn(2+) site is built by Asp291, Asp350, and Glu352. Arg354 is an active-site residue.

This sequence belongs to the peptidase M17 family. The cofactor is Mn(2+).

It is found in the cytoplasm. It catalyses the reaction Release of an N-terminal amino acid, Xaa-|-Yaa-, in which Xaa is preferably Leu, but may be other amino acids including Pro although not Arg or Lys, and Yaa may be Pro. Amino acid amides and methyl esters are also readily hydrolyzed, but rates on arylamides are exceedingly low.. It carries out the reaction Release of an N-terminal amino acid, preferentially leucine, but not glutamic or aspartic acids.. Functionally, presumably involved in the processing and regular turnover of intracellular proteins. Catalyzes the removal of unsubstituted N-terminal amino acids from various peptides. This chain is Probable cytosol aminopeptidase, found in Alkaliphilus metalliredigens (strain QYMF).